A 309-amino-acid chain; its full sequence is uncharacterized protein (309 aa).

The helical transmembrane segment at 23–39 (RFNVAIIGGTGGLGRAI) threads the bilayer.

It belongs to the NmrA-type oxidoreductase family.

It is found in the membrane. This is an uncharacterized protein from Saccharomyces cerevisiae (strain ATCC 204508 / S288c) (Baker's yeast).